We begin with the raw amino-acid sequence, 302 residues long: Aspartate carbamoyltransferase catalytic subunit (302 aa).

Carbamoyl phosphate-binding residues include arginine 53 and threonine 54. Position 82 (lysine 82) interacts with L-aspartate. Positions 103, 131, and 134 each coordinate carbamoyl phosphate. L-aspartate contacts are provided by arginine 164 and arginine 223. 2 residues coordinate carbamoyl phosphate: leucine 260 and proline 261.

The protein belongs to the aspartate/ornithine carbamoyltransferase superfamily. ATCase family. Heterooligomer of catalytic and regulatory chains.

The enzyme catalyses carbamoyl phosphate + L-aspartate = N-carbamoyl-L-aspartate + phosphate + H(+). It participates in pyrimidine metabolism; UMP biosynthesis via de novo pathway; (S)-dihydroorotate from bicarbonate: step 2/3. In terms of biological role, catalyzes the condensation of carbamoyl phosphate and aspartate to form carbamoyl aspartate and inorganic phosphate, the committed step in the de novo pyrimidine nucleotide biosynthesis pathway. This Methanococcus maripaludis (strain C6 / ATCC BAA-1332) protein is Aspartate carbamoyltransferase catalytic subunit.